Here is a 597-residue protein sequence, read N- to C-terminus: Elongation factor 4 (597 aa).

The region spanning 2 to 184 (KNIRNFSIIA…EIVAKIPAPT (183 aa)) is the tr-type G domain. Residues 14–19 (DHGKST) and 131–134 (NKID) each bind GTP.

Belongs to the TRAFAC class translation factor GTPase superfamily. Classic translation factor GTPase family. LepA subfamily.

The protein resides in the cell inner membrane. The enzyme catalyses GTP + H2O = GDP + phosphate + H(+). Its function is as follows. Required for accurate and efficient protein synthesis under certain stress conditions. May act as a fidelity factor of the translation reaction, by catalyzing a one-codon backward translocation of tRNAs on improperly translocated ribosomes. Back-translocation proceeds from a post-translocation (POST) complex to a pre-translocation (PRE) complex, thus giving elongation factor G a second chance to translocate the tRNAs correctly. Binds to ribosomes in a GTP-dependent manner. In Neisseria meningitidis serogroup B (strain ATCC BAA-335 / MC58), this protein is Elongation factor 4.